The following is a 336-amino-acid chain: Holliday junction branch migration complex subunit RuvB (336 aa).

The segment at A4 to Y184 is large ATPase domain (RuvB-L). ATP is bound by residues I23, R24, G65, K68, T69, T70, E131–Y133, R174, Y184, and R221. T69 provides a ligand contact to Mg(2+). A small ATPAse domain (RuvB-S) region spans residues Q185–N255. Residues A258–P336 are head domain (RuvB-H). The DNA site is built by R294, R313, and R318.

It belongs to the RuvB family. Homohexamer. Forms an RuvA(8)-RuvB(12)-Holliday junction (HJ) complex. HJ DNA is sandwiched between 2 RuvA tetramers; dsDNA enters through RuvA and exits via RuvB. An RuvB hexamer assembles on each DNA strand where it exits the tetramer. Each RuvB hexamer is contacted by two RuvA subunits (via domain III) on 2 adjacent RuvB subunits; this complex drives branch migration. In the full resolvosome a probable DNA-RuvA(4)-RuvB(12)-RuvC(2) complex forms which resolves the HJ.

The protein localises to the cytoplasm. It catalyses the reaction ATP + H2O = ADP + phosphate + H(+). Its function is as follows. The RuvA-RuvB-RuvC complex processes Holliday junction (HJ) DNA during genetic recombination and DNA repair, while the RuvA-RuvB complex plays an important role in the rescue of blocked DNA replication forks via replication fork reversal (RFR). RuvA specifically binds to HJ cruciform DNA, conferring on it an open structure. The RuvB hexamer acts as an ATP-dependent pump, pulling dsDNA into and through the RuvAB complex. RuvB forms 2 homohexamers on either side of HJ DNA bound by 1 or 2 RuvA tetramers; 4 subunits per hexamer contact DNA at a time. Coordinated motions by a converter formed by DNA-disengaged RuvB subunits stimulates ATP hydrolysis and nucleotide exchange. Immobilization of the converter enables RuvB to convert the ATP-contained energy into a lever motion, pulling 2 nucleotides of DNA out of the RuvA tetramer per ATP hydrolyzed, thus driving DNA branch migration. The RuvB motors rotate together with the DNA substrate, which together with the progressing nucleotide cycle form the mechanistic basis for DNA recombination by continuous HJ branch migration. Branch migration allows RuvC to scan DNA until it finds its consensus sequence, where it cleaves and resolves cruciform DNA. In Salmonella agona (strain SL483), this protein is Holliday junction branch migration complex subunit RuvB.